Here is an 85-residue protein sequence, read N- to C-terminus: Probable oxaloacetate decarboxylase gamma chain (85 aa).

The helical transmembrane segment at 11–33 threads the bilayer; it reads AAALMVTGMGVVFIFLTILIFLV.

The protein belongs to the OadG family. Heterotrimer of an alpha, a beta and a gamma subunit. Na(+) serves as cofactor.

The protein resides in the cell membrane. It carries out the reaction oxaloacetate + 2 Na(+)(in) + H(+) = pyruvate + 2 Na(+)(out) + CO2. Functionally, catalyzes the decarboxylation of oxaloacetate coupled to Na(+) translocation. The chain is Probable oxaloacetate decarboxylase gamma chain from Vibrio vulnificus (strain CMCP6).